Here is a 347-residue protein sequence, read N- to C-terminus: 5-deoxyribose 1-phosphate isomerase (347 aa).

Substrate-binding positions include 48–50 (RGA), R91, and Q198. The active-site Proton donor is the D239. A substrate-binding site is contributed by 249–250 (NK).

This sequence belongs to the EIF-2B alpha/beta/delta subunits family. DrdI subfamily.

It carries out the reaction 5-deoxy-alpha-D-ribose 1-phosphate = 5-deoxy-D-ribulose 1-phosphate. Its pathway is carbohydrate degradation. Functionally, catalyzes the isomerization of 5-deoxy-alpha-D-ribose 1-phosphate to 5-deoxy-D-ribulose 1-phosphate, as part of a 5-deoxyribose salvage pathway that recycles this toxic radical SAM enzyme by-product to mainstream metabolites. This is 5-deoxyribose 1-phosphate isomerase from Bacillus cereus (strain ATCC 14579 / DSM 31 / CCUG 7414 / JCM 2152 / NBRC 15305 / NCIMB 9373 / NCTC 2599 / NRRL B-3711).